Here is a 664-residue protein sequence, read N- to C-terminus: Macoilin (664 aa).

Helical transmembrane passes span 28-48 (TFLY…DFVL), 75-95 (AFSV…LLFI), 120-140 (VCLP…AIRF), and 154-174 (FAAH…KSYV). The span at 252-265 (YREKGKEKDKDAKK) shows a compositional bias: basic and acidic residues. Residues 252 to 274 (YREKGKEKDKDAKKHNLGINNNN) are disordered. A Phosphoserine modification is found at Ser305. Residues 320 to 348 (KNYKNASGVVNSSPRSHSATNGSIPSSSS) show a composition bias toward polar residues. The tract at residues 320 to 375 (KNYKNASGVVNSSPRSHSATNGSIPSSSSKNEKKQRCTSKGPSAHKDLMENCIPNN) is disordered. N-linked (GlcNAc...) asparagine glycosylation is present at Asn324. Phosphoserine is present on Ser332. Residues Asn340 and Asn452 are each glycosylated (N-linked (GlcNAc...) asparagine). Residues 630–664 (TSPLSPVSPHYSSKFVETSPSGLDPNASVYQPLKK) are disordered. A phosphoserine mark is found at Ser631 and Ser634. Asn655 carries an N-linked (GlcNAc...) asparagine glycan.

Belongs to the macoilin family.

The protein resides in the rough endoplasmic reticulum membrane. It is found in the nucleus membrane. Functionally, plays a role in the regulation of neuronal activity. This is Macoilin from Rattus norvegicus (Rat).